Here is a 416-residue protein sequence, read N- to C-terminus: Serine protease hepsin (416 aa).

Residues 1-18 (MAKEGGRTAPCCSRPKVA) lie on the Cytoplasmic side of the membrane. Residues 19-39 (ALTVGTLLFLTGIGAASWAIV) form a helical; Signal-anchor for type II membrane protein membrane-spanning segment. The Extracellular portion of the chain corresponds to 40-416 (TILLRSDQEP…SEATGMVTQP (377 aa)). The SRCR domain maps to 53–150 (VQLSPGDSRL…RGRFLTATCQ (98 aa)). Cystine bridges form between Cys-76-Cys-139, Cys-89-Cys-149, Cys-118-Cys-137, Cys-152-Cys-276, Cys-187-Cys-203, Cys-290-Cys-358, Cys-321-Cys-337, and Cys-348-Cys-380. An N-linked (GlcNAc...) asparagine glycan is attached at Asn-111. One can recognise a Peptidase S1 domain in the interval 162–404 (IVGGQDSSLG…FREWIFQAIK (243 aa)). Residues His-202 and Asp-256 each act as charge relay system in the active site. The active-site Charge relay system is the Ser-352.

It belongs to the peptidase S1 family. In terms of tissue distribution, widely expressed. Present in brain, heart, kidney, liver, stomach, muscle, lung, testis, skin and eye. Not expressed in ovary and thynus. In inner ear tissues, expressed in stria vascularis, modiolus, organ of Corti and spiral ganglion.

Its subcellular location is the cell membrane. It localises to the apical cell membrane. The catalysed reaction is Cleavage after basic amino-acid residues, with Arg strongly preferred to Lys.. Its function is as follows. Serine protease that cleaves extracellular substrates, and contributes to the proteolytic processing of growth factors, such as HGF and MST1/HGFL. Plays a role in cell growth and maintenance of cell morphology. Plays a role in the proteolytic processing of ACE2. Mediates the proteolytic cleavage of urinary UMOD that is required for UMOD polymerization. The chain is Serine protease hepsin (Hpn) from Rattus norvegicus (Rat).